The primary structure comprises 207 residues: High frequency lysogenization protein HflD homolog (207 aa).

Belongs to the HflD family.

Its subcellular location is the cytoplasm. The protein localises to the cell inner membrane. In Teredinibacter turnerae (strain ATCC 39867 / T7901), this protein is High frequency lysogenization protein HflD homolog.